The primary structure comprises 172 residues: NAD(P)H-quinone oxidoreductase subunit I, chloroplastic (172 aa).

4Fe-4S ferredoxin-type domains are found at residues glycine 55–lysine 84 and leucine 95–glutamate 124. [4Fe-4S] cluster is bound by residues cysteine 64, cysteine 67, cysteine 70, cysteine 74, cysteine 104, cysteine 107, cysteine 110, and cysteine 114.

This sequence belongs to the complex I 23 kDa subunit family. NDH is composed of at least 16 different subunits, 5 of which are encoded in the nucleus. It depends on [4Fe-4S] cluster as a cofactor.

It localises to the plastid. It is found in the chloroplast thylakoid membrane. It catalyses the reaction a plastoquinone + NADH + (n+1) H(+)(in) = a plastoquinol + NAD(+) + n H(+)(out). It carries out the reaction a plastoquinone + NADPH + (n+1) H(+)(in) = a plastoquinol + NADP(+) + n H(+)(out). In terms of biological role, NDH shuttles electrons from NAD(P)H:plastoquinone, via FMN and iron-sulfur (Fe-S) centers, to quinones in the photosynthetic chain and possibly in a chloroplast respiratory chain. The immediate electron acceptor for the enzyme in this species is believed to be plastoquinone. Couples the redox reaction to proton translocation, and thus conserves the redox energy in a proton gradient. This chain is NAD(P)H-quinone oxidoreductase subunit I, chloroplastic, found in Crucihimalaya wallichii (Rock-cress).